A 434-amino-acid polypeptide reads, in one-letter code: ATP-dependent protease ATPase subunit HslU (434 aa).

ATP contacts are provided by residues V18, 60-65 (GVGKTE), D247, E312, and R384.

The protein belongs to the ClpX chaperone family. HslU subfamily. A double ring-shaped homohexamer of HslV is capped on each side by a ring-shaped HslU homohexamer. The assembly of the HslU/HslV complex is dependent on binding of ATP.

It localises to the cytoplasm. In terms of biological role, ATPase subunit of a proteasome-like degradation complex; this subunit has chaperone activity. The binding of ATP and its subsequent hydrolysis by HslU are essential for unfolding of protein substrates subsequently hydrolyzed by HslV. HslU recognizes the N-terminal part of its protein substrates and unfolds these before they are guided to HslV for hydrolysis. The polypeptide is ATP-dependent protease ATPase subunit HslU (Phenylobacterium zucineum (strain HLK1)).